The following is a 377-amino-acid chain: 3-(aryl)acrylate reductase (377 aa).

FAD-binding positions include 121–130, 154–156, Arg266, Gln277, and 334–338; these read FALTEPGAGS, FIT, and QIHGG. Glu361 functions as the Proton acceptor in the catalytic mechanism. 363–365 is an FAD binding site; that stretch reads TSE.

This sequence belongs to the acyl-CoA dehydrogenase family. FAD is required as a cofactor.

The enzyme catalyses 3-phenylpropanoate + oxidized [electron-transfer flavoprotein] + H(+) = (E)-cinnamate + reduced [electron-transfer flavoprotein]. It carries out the reaction phloretate + oxidized [electron-transfer flavoprotein] + H(+) = (E)-4-coumarate + reduced [electron-transfer flavoprotein]. The catalysed reaction is indole-3-propanoate + oxidized [electron-transfer flavoprotein] + H(+) = (E)-3-(indol-3-yl)acrylate + reduced [electron-transfer flavoprotein]. The protein operates within amino-acid degradation. Functionally, essential for the reductive metabolism of L-phenylalanine, L-tyrosine and L-tryptophan. Catalyzes the reduction of phenylacrylic acid to phenylpropionic acid, 4-hydroxy-phenylacrylic acid to 4-hydroxy-phenylpropionic acid, and indoleacrylic acid to indolepropionic acid. The polypeptide is 3-(aryl)acrylate reductase (Clostridium sporogenes (strain ATCC 15579)).